The chain runs to 80 residues: Gamma-conotoxin-like Am6.6 (80 aa).

Residues 1-19 form the signal peptide; the sequence is MEKLTILLLVAAILMSTQA. Residues 20 to 45 constitute a propeptide that is removed on maturation; the sequence is LNQEQRQQAKINLLSKKKPSAERWRR. 3 disulfide bridges follow: Cys-47-Cys-61, Cys-54-Cys-65, and Cys-60-Cys-70. Glu-56 and Glu-59 each carry 4-carboxyglutamate. At Glu-71 the chain carries 4-carboxyglutamate. Pro-76 is modified (4-hydroxyproline). The propeptide occupies 78 to 80; that stretch reads RAI.

Belongs to the conotoxin O2 family. In terms of tissue distribution, expressed by the venom duct.

It is found in the secreted. Functionally, gamma-conotoxins may act on voltage-gated non-specific cation pacemaker channels (HCN). The chain is Gamma-conotoxin-like Am6.6 from Conus amadis (Amadis cone).